The following is a 245-amino-acid chain: 2,3-bisphosphoglycerate-dependent phosphoglycerate mutase (245 aa).

Substrate-binding positions include 8–15 (RHGQSLWN), 21–22 (TG), arginine 60, 87–90 (ERHY), lysine 98, 114–115 (RR), and 183–184 (GN). Residue histidine 9 is the Tele-phosphohistidine intermediate of the active site. Glutamate 87 serves as the catalytic Proton donor/acceptor.

It belongs to the phosphoglycerate mutase family. BPG-dependent PGAM subfamily.

The enzyme catalyses (2R)-2-phosphoglycerate = (2R)-3-phosphoglycerate. It functions in the pathway carbohydrate degradation; glycolysis; pyruvate from D-glyceraldehyde 3-phosphate: step 3/5. In terms of biological role, catalyzes the interconversion of 2-phosphoglycerate and 3-phosphoglycerate. In Bacillus anthracis (strain A0248), this protein is 2,3-bisphosphoglycerate-dependent phosphoglycerate mutase.